Reading from the N-terminus, the 87-residue chain is Small ribosomal subunit protein uS17 (87 aa).

This sequence belongs to the universal ribosomal protein uS17 family. Part of the 30S ribosomal subunit.

In terms of biological role, one of the primary rRNA binding proteins, it binds specifically to the 5'-end of 16S ribosomal RNA. The sequence is that of Small ribosomal subunit protein uS17 from Bacillus subtilis (strain 168).